Reading from the N-terminus, the 80-residue chain is N-V protease (80 aa).

Belongs to the peptidase S8 family. Monomer. As to expression, body cavity.

Its subcellular location is the secreted. With respect to regulation, inhibited by the serine protease inhibitors DFP, PMSF and TLCK. Not inhibited by the serine protease inhibitors aprotinin, elastinal, SBTI and benzamidine, the cysteine protease inhibitors iodoacetate and E64, or the metalloprotease inhibitors EDTA and EGTA. Functionally, serine protease. Hydrolyzes the alpha chains of fibrin and fibrinogen completely, has lower activity on the beta and gamma chains of fibrin and fibrinogen. This is N-V protease from Alitta virens (Sandworm).